Here is a 506-residue protein sequence, read N- to C-terminus: Secreted RxLR effector protein 134 (506 aa).

An N-terminal signal peptide occupies residues 1–19 (MQGAYCVAVALLIAASGQA). The RxLR-dEER signature appears at 50 to 71 (RVLQVSHYPKDDLMLLAGNEER).

Belongs to the RxLR effector family.

It localises to the secreted. It is found in the host nucleus. Secreted effector that completely suppresses the host cell death induced by cell death-inducing proteins. The sequence is that of Secreted RxLR effector protein 134 from Plasmopara viticola (Downy mildew of grapevine).